An 80-amino-acid chain; its full sequence is Raniseptin-7 (80 aa).

Positions 1–22 are cleaved as a signal peptide; the sequence is MAFLKKSLFLVLFLGIVSLSIC. A propeptide spanning residues 23 to 49 is cleaved from the precursor; the sequence is EEEKREGEEEEKQEEENEELSEEELRE. A disordered region spans residues 27–46; that stretch reads REGEEEEKQEEENEELSEEE. Residues 30–44 show a composition bias toward acidic residues; sequence EEEEKQEEENEELSE.

It belongs to the frog skin active peptide (FSAP) family. Dermaseptin subfamily. In terms of tissue distribution, expressed by the skin glands.

Its subcellular location is the secreted. Has antibacterial activity. This is Raniseptin-7 from Boana raniceps (Chaco tree frog).